We begin with the raw amino-acid sequence, 426 residues long: Bifunctional protein GlmU (426 aa).

The interval 1–216 (MSEVDVVILA…WHDILGVNTQ (216 aa)) is pyrophosphorylase. Residues 9 to 12 (LAAG), lysine 23, and glutamine 69 each bind UDP-N-acetyl-alpha-D-glucosamine. Aspartate 97 contacts Mg(2+). Residues glycine 132, glutamate 148, asparagine 163, and asparagine 214 each coordinate UDP-N-acetyl-alpha-D-glucosamine. Asparagine 214 is a binding site for Mg(2+). Residues 217-237 (QQLAAVSKIARKRINDQIMAN) form a linker region. The tract at residues 238–426 (GVTMIDPLTT…AKHDQRDDQP (189 aa)) is N-acetyltransferase. Positions 286 and 304 each coordinate UDP-N-acetyl-alpha-D-glucosamine. The Proton acceptor role is filled by histidine 316. Residues tyrosine 319 and asparagine 330 each coordinate UDP-N-acetyl-alpha-D-glucosamine. Residues alanine 333, 339-340 (NY), serine 358, alanine 376, and arginine 393 each bind acetyl-CoA.

The protein in the N-terminal section; belongs to the N-acetylglucosamine-1-phosphate uridyltransferase family. It in the C-terminal section; belongs to the transferase hexapeptide repeat family. In terms of assembly, homotrimer. Requires Mg(2+) as cofactor.

Its subcellular location is the cytoplasm. It catalyses the reaction alpha-D-glucosamine 1-phosphate + acetyl-CoA = N-acetyl-alpha-D-glucosamine 1-phosphate + CoA + H(+). The enzyme catalyses N-acetyl-alpha-D-glucosamine 1-phosphate + UTP + H(+) = UDP-N-acetyl-alpha-D-glucosamine + diphosphate. Its pathway is nucleotide-sugar biosynthesis; UDP-N-acetyl-alpha-D-glucosamine biosynthesis; N-acetyl-alpha-D-glucosamine 1-phosphate from alpha-D-glucosamine 6-phosphate (route II): step 2/2. It functions in the pathway nucleotide-sugar biosynthesis; UDP-N-acetyl-alpha-D-glucosamine biosynthesis; UDP-N-acetyl-alpha-D-glucosamine from N-acetyl-alpha-D-glucosamine 1-phosphate: step 1/1. The protein operates within bacterial outer membrane biogenesis; LPS lipid A biosynthesis. In terms of biological role, catalyzes the last two sequential reactions in the de novo biosynthetic pathway for UDP-N-acetylglucosamine (UDP-GlcNAc). The C-terminal domain catalyzes the transfer of acetyl group from acetyl coenzyme A to glucosamine-1-phosphate (GlcN-1-P) to produce N-acetylglucosamine-1-phosphate (GlcNAc-1-P), which is converted into UDP-GlcNAc by the transfer of uridine 5-monophosphate (from uridine 5-triphosphate), a reaction catalyzed by the N-terminal domain. This chain is Bifunctional protein GlmU, found in Oenococcus oeni (strain ATCC BAA-331 / PSU-1).